Consider the following 380-residue polypeptide: Queuine tRNA-ribosyltransferase (380 aa).

Asp96 functions as the Proton acceptor in the catalytic mechanism. Residues 96 to 100 (DSGGF), Asp150, Gln193, and Gly220 contribute to the substrate site. An RNA binding region spans residues 251–257 (GVGAPDS). The Nucleophile role is filled by Asp270. Positions 275–279 (TRIAR) are RNA binding; important for wobble base 34 recognition. Residues Cys308, Cys310, Cys313, and His339 each contribute to the Zn(2+) site.

The protein belongs to the queuine tRNA-ribosyltransferase family. In terms of assembly, homodimer. Within each dimer, one monomer is responsible for RNA recognition and catalysis, while the other monomer binds to the replacement base PreQ1. It depends on Zn(2+) as a cofactor.

It catalyses the reaction 7-aminomethyl-7-carbaguanine + guanosine(34) in tRNA = 7-aminomethyl-7-carbaguanosine(34) in tRNA + guanine. It functions in the pathway tRNA modification; tRNA-queuosine biosynthesis. Catalyzes the base-exchange of a guanine (G) residue with the queuine precursor 7-aminomethyl-7-deazaguanine (PreQ1) at position 34 (anticodon wobble position) in tRNAs with GU(N) anticodons (tRNA-Asp, -Asn, -His and -Tyr). Catalysis occurs through a double-displacement mechanism. The nucleophile active site attacks the C1' of nucleotide 34 to detach the guanine base from the RNA, forming a covalent enzyme-RNA intermediate. The proton acceptor active site deprotonates the incoming PreQ1, allowing a nucleophilic attack on the C1' of the ribose to form the product. After dissociation, two additional enzymatic reactions on the tRNA convert PreQ1 to queuine (Q), resulting in the hypermodified nucleoside queuosine (7-(((4,5-cis-dihydroxy-2-cyclopenten-1-yl)amino)methyl)-7-deazaguanosine). The polypeptide is Queuine tRNA-ribosyltransferase (Streptococcus pneumoniae (strain P1031)).